A 355-amino-acid chain; its full sequence is Nuclear hormone receptor family member nhr-127 (355 aa).

The nuclear receptor DNA-binding region spans 10-86 (SIPCEVCKNQ…AGMKAEKIQK (77 aa)). 2 NR C4-type zinc fingers span residues 13–33 (CEVC…CGAC) and 49–69 (CKDG…CRYC). Positions 126-355 (NPHNASEGCS…IVQIVQNNFY (230 aa)) constitute an NR LBD domain.

Belongs to the nuclear hormone receptor family.

The protein localises to the nucleus. Orphan nuclear receptor. May play a role in modulation of lifespan and immunity. This Caenorhabditis elegans protein is Nuclear hormone receptor family member nhr-127 (nhr-127).